The sequence spans 314 residues: Ribosomal protein L11 methyltransferase (314 aa).

Positions 166, 187, 209, and 251 each coordinate S-adenosyl-L-methionine.

Belongs to the methyltransferase superfamily. PrmA family.

Its subcellular location is the cytoplasm. The enzyme catalyses L-lysyl-[protein] + 3 S-adenosyl-L-methionine = N(6),N(6),N(6)-trimethyl-L-lysyl-[protein] + 3 S-adenosyl-L-homocysteine + 3 H(+). Methylates ribosomal protein L11. In Clostridium tetani (strain Massachusetts / E88), this protein is Ribosomal protein L11 methyltransferase.